A 93-amino-acid chain; its full sequence is Neutrophil cationic peptide 2 (93 aa).

An N-terminal signal peptide occupies residues 1–19; it reads MRTVPLFAACLLLTLMAQA. Residues 20–62 constitute a propeptide that is removed on maturation; sequence EPLPRAADHSDTKMKGDREDHVAVISFWEEESTSLQDAGAGAG. 3 cysteine pairs are disulfide-bonded: Cys65–Cys93, Cys67–Cys82, and Cys72–Cys92.

Belongs to the alpha-defensin family.

The protein resides in the secreted. Has antibiotic, anti-fungi and antiviral activity. This is Neutrophil cationic peptide 2 from Cavia porcellus (Guinea pig).